We begin with the raw amino-acid sequence, 232 residues long: VLGGDECDINEHPFLAFLYSHGYFCGLTLINQEWVVTAAHCDSTNFQMQLGVHSKKVLNEDEQTRNPKEKFICPNKNMSEVLDKDIMLIKLDKPISNSKHIAPLSLPSNPPSVGSVCRIMGWGSITIPNETYPDVPYCANINLVDYEVCQGAYNGLPAKTTLCAGVLEGGKDTCVGDSGGPLICNGQFQGIVSYGAHSCGQGPKPGIYTNVFDYTDWIQRNIAGNTDATCPP.

The 223-residue stretch at V1–A223 folds into the Peptidase S1 domain. 6 disulfide bridges follow: C7–C138, C25–C41, C73–C230, C117–C184, C149–C163, and C174–C199. The Charge relay system role is filled by H40. A glycan (N-linked (GlcNAc...) asparagine) is linked at N77. The Charge relay system role is filled by D85. A glycan (N-linked (GlcNAc...) asparagine) is linked at N129. Catalysis depends on S178, which acts as the Charge relay system.

Belongs to the peptidase S1 family. Snake venom subfamily. Monomer. Post-translationally, N-glycosylated. Contains sialic acid residues. Deglycosylation reduces in 50% the formation of fibrin clot. As to expression, expressed by the venom gland.

It localises to the secreted. Inhibited by leupeptin, heparin, and 1.10-phenantroline. Thrombin-like enzyme that shows clotting activity upon human plasma. Shows specific fibrinogenolytic activity for Aalpha chain (FGA). Hydrolyzes fibrin, BAPNA and TAME, as well as chromogenic artificial substrates of the blood coagulation cascasde: S-27654 for factor X (F10), S-2302 for kallikrein (KLK), factor XIa (F11), and XIIa (F12), and S-2266 for kallikrein and factor XIa (F11). Subcutaneous injection into mice induces a mild edema. Intravenous and intramuscular injection reduce plasma fibrinogen concentration and increase the levels of fibrin(ogen) degradation products. Intramuscular injection also promotes an increase in the expression of proMMP-9, but is unable to activate it. This chain is Thrombin-like enzyme BjussuSP-1, found in Bothrops jararacussu (Jararacussu).